Consider the following 553-residue polypeptide: MAEEESEFLEAYAGIRTAYKAAMTQVDLAVSHEEQESPGQAIVAYELALRMIEDTFGIPVGLPNKIDTVQAEWNDACALIQKLKSAETELRYRLKVLRSQKQSIDDSAVEATEESRAEMDTKRPPLLAENPSTQYGIANASGAPKTYRELAAGLRELLAVRDAKVLLDELFRAQVKMYRIEASGSVTTISGSSTMSLVMCTVGGKWKYLSGIYFIQCSMPNEGTAGIWLYPLVPSITNCYQTEYGAFIFPDMECQQPGNAFGLMLTKEGQTSRTEDELEDLQQFFLDLLEAVLAGTVVQLKSPTSQRAGLASDTVSGSEQVSRHIVSAADFIASNLVRGAEKTGGFMLRSTPYIISKMTPASMDAQVPSSVQTSVEVAQKVTHAAAGMTGWIAGKVGTASMAVGRYLAPHIQEQGSKLLQKGFGYDTSEANSTMEGAMTIAAGAVEGVSTVFDGLETSAKILGSSLSENSVKIIEHKYGQQTGNLASGTFDTVGNVFVVSQNVNYITPKGIAKKMVKRTGEAVVSDYKRDLRKSESHYINAGSLYPDLRALKE.

An MIT domain is found at 15–96 (IRTAYKAAMT…ETELRYRLKV (82 aa)). Residues 105 to 130 (DDSAVEATEESRAEMDTKRPPLLAEN) form a disordered region. Over residues 113-123 (EESRAEMDTKR) the composition is skewed to basic and acidic residues. In terms of domain architecture, Senescence spans 325 to 509 (IVSAADFIAS…SQNVNYITPK (185 aa)).

As to quaternary structure, interacts with Eps-15 (via C-terminal region); the interaction is required for spartin localization to the NMJ presynaptic membrane. As to expression, expressed in larval brain, ventral nerve cord and neuropil (at protein level).

It is found in the presynaptic cell membrane. The protein resides in the early endosome. Its subcellular location is the lipid droplet. Functionally, during postembryonic development, functions with endocytic adapter Eps-15 in neurons to restrain synaptic growth, by inhibiting BMP signaling, and to control synaptic endocytosis. Required presynaptically for neuromuscular junction (NMJ) neurotransmission. Inhibits neuronal BMP signaling by promoting endocytic internalization and subsequent endosomal trafficking of the BMP receptor wit. In this way, regulates the Fmr1 translational regulator controlling Futsch expression to modulate neuronal microtubule stability, which controls both synaptogenesis and neuronal survival. This is Protein spartin from Drosophila melanogaster (Fruit fly).